The sequence spans 327 residues: Metapyrocatechase (327 aa).

VOC domains lie at 14-126 (QLAH…IFFE) and 156-276 (RLDH…LFGD). 3 residues coordinate Fe cation: His159, His221, and Glu272.

This sequence belongs to the extradiol ring-cleavage dioxygenase family. Fe(2+) is required as a cofactor.

The catalysed reaction is catechol + O2 = (2Z,4E)-2-hydroxy-6-oxohexa-2,4-dienoate + H(+). The polypeptide is Metapyrocatechase (pheB) (Geobacillus stearothermophilus (Bacillus stearothermophilus)).